Reading from the N-terminus, the 245-residue chain is CMRF35-like molecule 3 (245 aa).

An N-terminal signal peptide occupies residues 1-18 (MWQFPALLFLFLPGCCTA). One can recognise an Ig-like V-type domain in the interval 19–124 (QDPVTGPEEV…TDPMFKVNVN (106 aa)). Topologically, residues 19-189 (QDPVTGPEEV…FIWSLLSSIS (171 aa)) are extracellular. Cysteines 40 and 108 form a disulfide. Important for maintaining surface expression and for interaction with FCER1G stretches follow at residues 177–182 (NSLFIW) and 189–198 (SFLLMVFVVV). Residues 190–210 (FLLMVFVVVPLLLSMLSAVLW) traverse the membrane as a helical segment. The Cytoplasmic portion of the chain corresponds to 211–245 (VNRPQRHYGGGEIGLVETHRSDALDGEKHFPGDEK).

This sequence belongs to the CD300 family. As to quaternary structure, interacts with FCER1G; the interaction may be indirect. Interacts with TLR9. In terms of tissue distribution, highly expressed in bone marrow-derived mast cells and macrophages, peripheral blood monocytes and CD11c+ cells, with weaker expression detected in CD11b cells in bone marrow and peripheral blood. Not detected in B220+ cells in bone marrow or spleen, in Thy-1.2+ or CD3+ cells in peripheral blood, spleen or thymus, or in NK1.1+ cells in spleen (at protein level). Widely expressed in various tissues including heart, liver, spleen, lung, kidney, brain, bone marrow, thymus, axillary lymph node and mesenteric lymph node. Highly expressed in macrophage cell lines J774.1 and RAW 264.7 and in mast cell line MC/9. Weak expression detected in B-lineage cell lines WEHI-231 and A20 and in dendritic cell line DC2.4. Not detected in other myeloid cell lines or T-lineage cell lines.

The protein localises to the cell membrane. The protein resides in the early endosome. It is found in the lysosome. Acts as an activating receptor inducing cytokine production in mast cells. Can act as a positive regulator of TLR9 signaling in macrophages, leading to enhanced production of pro-inflammatory cytokines. The protein is CMRF35-like molecule 3 of Mus musculus (Mouse).